The sequence spans 413 residues: Glucose-1-phosphate adenylyltransferase (413 aa).

Residues Tyr-102, Gly-167, 182–183 (EK), and Ser-200 contribute to the alpha-D-glucose 1-phosphate site.

It belongs to the bacterial/plant glucose-1-phosphate adenylyltransferase family. In terms of assembly, homotetramer.

It catalyses the reaction alpha-D-glucose 1-phosphate + ATP + H(+) = ADP-alpha-D-glucose + diphosphate. The protein operates within glycan biosynthesis; glycogen biosynthesis. Involved in the biosynthesis of ADP-glucose, a building block required for the elongation reactions to produce glycogen. Catalyzes the reaction between ATP and alpha-D-glucose 1-phosphate (G1P) to produce pyrophosphate and ADP-Glc. In Deinococcus deserti (strain DSM 17065 / CIP 109153 / LMG 22923 / VCD115), this protein is Glucose-1-phosphate adenylyltransferase.